Reading from the N-terminus, the 311-residue chain is MDRSTDLDIQELKMTREQYILATQQNNLPRPENAQLYPVGIYGWRKRCLYFFVLLLLVTMIVNLAMTIWILKVMNFTVDGMGNLRVTKKGIRLEGISEFLLPLYVKEIHSRKDSPLVLQSDRNVTVNARNHMGQLTGQLTVGAEAVEAQCKRFEVRASEDGRVLFSADEDEITIGAEKLKVTGTEGAVFGHSVETPHIRAEPSQDLRLESPTRSLKMEAPRGVQVSAAAGDFKATCRKELHLQSTEGEIFLNADSIRLGNLPIGSFSSSTSSSNSRQTVYELCVCPNGKLYLSPAGVGSTCQSSSSICLWN.

Over 1–50 (MDRSTDLDIQELKMTREQYILATQQNNLPRPENAQLYPVGIYGWRKRCLY) the chain is Cytoplasmic. Residues 51–71 (FFVLLLLVTMIVNLAMTIWIL) form a helical; Signal-anchor for type II membrane protein membrane-spanning segment. The Extracellular portion of the chain corresponds to 72 to 311 (KVMNFTVDGM…QSSSSICLWN (240 aa)). Asparagine 75 and asparagine 123 each carry an N-linked (GlcNAc...) asparagine glycan. A disulfide bridge links cysteine 285 with cysteine 301.

It belongs to the sarcoglycan beta/delta/gamma/zeta family. Expressed in the heart, skeletal muscle and arterial vascular smooth muscle.

Its subcellular location is the cell membrane. The protein resides in the sarcolemma. It localises to the cytoplasm. It is found in the cytoskeleton. Functionally, component of the sarcoglycan complex, a subcomplex of the dystrophin-glycoprotein complex which forms a link between the F-actin cytoskeleton and the extracellular matrix. May play a role in the maintenance of striated muscle membrane stability. The protein is Zeta-sarcoglycan (Sgcz) of Mus musculus (Mouse).